A 496-amino-acid polypeptide reads, in one-letter code: Chromosomal replication initiator protein DnaA (496 aa).

The segment at 1-76 (MKMDSAVSEE…TELWQEENPQ (76 aa)) is domain I, interacts with DnaA modulators. The interval 76-150 (QILKVEVVVR…AAATGAVLGS (75 aa)) is domain II. The tract at residues 151 to 373 (PLDPRYTFDT…GAFNQLLFRQ (223 aa)) is domain III, AAA+ region. Residues glycine 197, glycine 199, lysine 200, and threonine 201 each coordinate ATP. The domain IV, binds dsDNA stretch occupies residues 374–496 (SFEPNISIDR…LKRLINDQAA (123 aa)).

This sequence belongs to the DnaA family. In terms of assembly, oligomerizes as a right-handed, spiral filament on DNA at oriC.

It is found in the cytoplasm. In terms of biological role, plays an essential role in the initiation and regulation of chromosomal replication. ATP-DnaA binds to the origin of replication (oriC) to initiate formation of the DNA replication initiation complex once per cell cycle. Binds the DnaA box (a 9 base pair repeat at the origin) and separates the double-stranded (ds)DNA. Forms a right-handed helical filament on oriC DNA; dsDNA binds to the exterior of the filament while single-stranded (ss)DNA is stabiized in the filament's interior. The ATP-DnaA-oriC complex binds and stabilizes one strand of the AT-rich DNA unwinding element (DUE), permitting loading of DNA polymerase. After initiation quickly degrades to an ADP-DnaA complex that is not apt for DNA replication. Binds acidic phospholipids. The chain is Chromosomal replication initiator protein DnaA from Brucella abortus biovar 1 (strain 9-941).